Reading from the N-terminus, the 606-residue chain is ATP-dependent rRNA helicase spb4 (606 aa).

The Q motif signature appears at 1–29 (MSFQSINIDKWLKNAVAAQGFKKMTPVQA). One can recognise a Helicase ATP-binding domain in the interval 32–213 (IPLFLKNKDL…KIAGLRNSVR (182 aa)). Residue 45-52 (AVTGSGKT) coordinates ATP. The DEAD box signature appears at 161-164 (DEAD). Residues 246–400 (CMIHLLCTIE…ALDLSRLKVL (155 aa)) form the Helicase C-terminal domain. Residues 521–574 (KQKEVKEKRNTRREKRKSKKEFLKAQKNEASNNLKQEIVSKAGAQETENDDLID) are disordered. The stretch at 521-601 (KQKEVKEKRN…KSKKRKNQAS (81 aa)) forms a coiled coil. Positions 529–539 (RNTRREKRKSK) are enriched in basic residues.

Belongs to the DEAD box helicase family. DDX55/SPB4 subfamily. Component of pre-60S ribosomal complexes.

It is found in the nucleus. Its subcellular location is the nucleolus. It carries out the reaction ATP + H2O = ADP + phosphate + H(+). ATP-binding RNA helicase involved in the biogenesis of 60S ribosomal subunits. Binds 90S pre-ribosomal particles and dissociates from pre-60S ribosomal particles after processing of 27SB pre-rRNA. Required for the normal formation of 18S rRNA through the processing of pre-rRNAs at sites A0, A1 and A2, and the normal formation of 25S and 5.8S rRNAs through the processing of pre-rRNAs at sites C1 and C2. This Schizosaccharomyces pombe (strain 972 / ATCC 24843) (Fission yeast) protein is ATP-dependent rRNA helicase spb4.